Reading from the N-terminus, the 408-residue chain is Succinylornithine transaminase (408 aa).

K252 carries the post-translational modification N6-(pyridoxal phosphate)lysine.

This sequence belongs to the class-III pyridoxal-phosphate-dependent aminotransferase family. AstC subfamily. Requires pyridoxal 5'-phosphate as cofactor.

The catalysed reaction is N(2)-succinyl-L-ornithine + 2-oxoglutarate = N-succinyl-L-glutamate 5-semialdehyde + L-glutamate. It participates in amino-acid degradation; L-arginine degradation via AST pathway; L-glutamate and succinate from L-arginine: step 3/5. Its function is as follows. Catalyzes the transamination of N(2)-succinylornithine and alpha-ketoglutarate into N(2)-succinylglutamate semialdehyde and glutamate. Can also act as an acetylornithine aminotransferase. The chain is Succinylornithine transaminase from Salmonella enteritidis PT4 (strain P125109).